A 1118-amino-acid polypeptide reads, in one-letter code: cGMP-specific 3',5'-cyclic phosphodiesterase (1118 aa).

A disordered region spans residues 1–142 (MTDVSSPAGG…KASTTASQQD (142 aa)). Over residues 18–33 (STTSSSSAATTSASSS) the composition is skewed to low complexity. The span at 34–45 (KPLTNGANKTAI) shows a compositional bias: polar residues. 2 stretches are compositionally biased toward low complexity: residues 46–56 (STAAGGVTPGA) and 63–72 (GAIPASSSSG). Polar residues predominate over residues 84–101 (SNNNRPAVTNRSSETKLM). The span at 102–128 (TPTGSSSSPSQSPSQTQASIQTQTSQQ) shows a compositional bias: low complexity. GAF domains lie at 247–399 (DIDV…GIGI) and 431–612 (NLEC…GLGI). The 324-residue stretch at 642 to 965 (SQDQTEKLTQ…RNWQDLAEKV (324 aa)) folds into the PDEase domain. The active-site Proton donor is the H718. A divalent metal cation contacts are provided by H722, H758, D759, and D869. Disordered regions lie at residues 1006-1035 (QQSQHGSEDSHTPEHQRSGSRLSMKKTGAL) and 1065-1118 (SHVS…CALL). Basic and acidic residues-rich tracts occupy residues 1011 to 1022 (GSEDSHTPEHQR) and 1065 to 1075 (SHVSEDMDDKS). Residues 1084 to 1104 (ASGSMGRMSASSSTSSAGGQM) are compositionally biased toward low complexity. Residues 1108–1118 (SKKRSKLCALL) show a composition bias toward basic residues. C1115 carries the post-translational modification Cysteine methyl ester. C1115 carries the S-farnesyl cysteine lipid modification. A propeptide spans 1116-1118 (ALL) (removed in mature form).

It belongs to the cyclic nucleotide phosphodiesterase family. Interacts with PrBP. A divalent metal cation serves as cofactor. In terms of tissue distribution, expressed in Malpighian tubule principal cells. Also expressed in adult head.

It is found in the cell membrane. It catalyses the reaction 3',5'-cyclic GMP + H2O = GMP + H(+). With respect to regulation, inhibited by sildenafil and zaprinast. Its function is as follows. Hydrolyzes the second messenger cGMP, which is a key regulator of many important physiological processes. Has cAMP phosphodiesterase activity in vitro but not in vivo. Has a role regulating cGMP transport in Malpighian tubule principal cells. This chain is cGMP-specific 3',5'-cyclic phosphodiesterase (Pde6), found in Drosophila melanogaster (Fruit fly).